The sequence spans 398 residues: Stearoyl-[acyl-carrier-protein] 9-desaturase, chloroplastic (398 aa).

The N-terminal 34 residues, 1-34 (MALKLNPLASQPYNFPSSARPPISTFRSPKFLCL), are a transit peptide targeting the chloroplast. Fe cation-binding residues include glutamate 140, glutamate 178, histidine 181, glutamate 231, glutamate 264, and histidine 267.

Belongs to the fatty acid desaturase type 2 family. In terms of assembly, homodimer. The cofactor is Fe(2+).

The protein localises to the plastid. It localises to the chloroplast. The catalysed reaction is octadecanoyl-[ACP] + 2 reduced [2Fe-2S]-[ferredoxin] + O2 + 2 H(+) = (9Z)-octadecenoyl-[ACP] + 2 oxidized [2Fe-2S]-[ferredoxin] + 2 H2O. It functions in the pathway lipid metabolism; fatty acid metabolism. In terms of biological role, converts stearoyl-ACP to oleoyl-ACP by introduction of a cis double bond between carbons 9 and 10 of the acyl chain. In Brassica napus (Rape), this protein is Stearoyl-[acyl-carrier-protein] 9-desaturase, chloroplastic.